We begin with the raw amino-acid sequence, 101 residues long: Small ribosomal subunit protein uS14 (101 aa).

The segment at 1–20 (MAKTSAVEKNKRRRKLVANH) is disordered. Over residues 10–20 (NKRRRKLVANH) the composition is skewed to basic residues.

Belongs to the universal ribosomal protein uS14 family. As to quaternary structure, part of the 30S ribosomal subunit. Contacts proteins S3 and S10.

In terms of biological role, binds 16S rRNA, required for the assembly of 30S particles and may also be responsible for determining the conformation of the 16S rRNA at the A site. In Sinorhizobium medicae (strain WSM419) (Ensifer medicae), this protein is Small ribosomal subunit protein uS14.